A 217-amino-acid polypeptide reads, in one-letter code: Adenylate kinase (217 aa).

10 to 15 (GAGKGT) is a binding site for ATP. Positions 30–59 (STGDMLRAAVKAGTPLGLEAKKVMDSGGLV) are NMP. AMP contacts are provided by residues Thr31, Arg36, 57-59 (GLV), 85-88 (GFPR), and Gln92. An LID region spans residues 122–159 (GRRVHVASGRTYHVKFNPPKVAGVDDVTGEPLIQRDDD). ATP contacts are provided by residues Arg123 and 132 to 133 (TY). 2 residues coordinate AMP: Arg156 and Arg167. An ATP-binding site is contributed by Gly203.

Belongs to the adenylate kinase family. As to quaternary structure, monomer.

The protein localises to the cytoplasm. It carries out the reaction AMP + ATP = 2 ADP. The protein operates within purine metabolism; AMP biosynthesis via salvage pathway; AMP from ADP: step 1/1. Its function is as follows. Catalyzes the reversible transfer of the terminal phosphate group between ATP and AMP. Plays an important role in cellular energy homeostasis and in adenine nucleotide metabolism. The chain is Adenylate kinase from Methylibium petroleiphilum (strain ATCC BAA-1232 / LMG 22953 / PM1).